Consider the following 729-residue polypeptide: Fatty acid oxidation complex subunit alpha (729 aa).

Residues 1-189 (MLYKGDTLYL…KVGLVDAVVK (189 aa)) are enoyl-CoA hydratase/isomerase. D296 is a substrate binding site. The tract at residues 311–729 (ETPKQAAVLG…AQPVGELQTA (419 aa)) is 3-hydroxyacyl-CoA dehydrogenase. Residues M324, D343, 400–402 (VVE), K407, and S429 contribute to the NAD(+) site. The active-site For 3-hydroxyacyl-CoA dehydrogenase activity is the H450. N453 is a binding site for NAD(+). N500 and Y660 together coordinate substrate. A disordered region spans residues 708-729 (SHNAPYYPQVEPAQPVGELQTA).

It in the N-terminal section; belongs to the enoyl-CoA hydratase/isomerase family. This sequence in the C-terminal section; belongs to the 3-hydroxyacyl-CoA dehydrogenase family. As to quaternary structure, heterotetramer of two alpha chains (FadB) and two beta chains (FadA).

It carries out the reaction a (3S)-3-hydroxyacyl-CoA + NAD(+) = a 3-oxoacyl-CoA + NADH + H(+). The enzyme catalyses a (3S)-3-hydroxyacyl-CoA = a (2E)-enoyl-CoA + H2O. The catalysed reaction is a 4-saturated-(3S)-3-hydroxyacyl-CoA = a (3E)-enoyl-CoA + H2O. It catalyses the reaction (3S)-3-hydroxybutanoyl-CoA = (3R)-3-hydroxybutanoyl-CoA. It carries out the reaction a (3Z)-enoyl-CoA = a 4-saturated (2E)-enoyl-CoA. The enzyme catalyses a (3E)-enoyl-CoA = a 4-saturated (2E)-enoyl-CoA. It functions in the pathway lipid metabolism; fatty acid beta-oxidation. Its function is as follows. Involved in the aerobic and anaerobic degradation of long-chain fatty acids via beta-oxidation cycle. Catalyzes the formation of 3-oxoacyl-CoA from enoyl-CoA via L-3-hydroxyacyl-CoA. It can also use D-3-hydroxyacyl-CoA and cis-3-enoyl-CoA as substrate. This chain is Fatty acid oxidation complex subunit alpha, found in Cronobacter sakazakii (strain ATCC BAA-894) (Enterobacter sakazakii).